Consider the following 237-residue polypeptide: Ubiquinone biosynthesis O-methyltransferase (237 aa).

Residues Arg-38, Gly-58, Asp-79, and Met-124 each contribute to the S-adenosyl-L-methionine site.

It belongs to the methyltransferase superfamily. UbiG/COQ3 family.

The enzyme catalyses a 3-demethylubiquinol + S-adenosyl-L-methionine = a ubiquinol + S-adenosyl-L-homocysteine + H(+). It catalyses the reaction a 3-(all-trans-polyprenyl)benzene-1,2-diol + S-adenosyl-L-methionine = a 2-methoxy-6-(all-trans-polyprenyl)phenol + S-adenosyl-L-homocysteine + H(+). It participates in cofactor biosynthesis; ubiquinone biosynthesis. Functionally, O-methyltransferase that catalyzes the 2 O-methylation steps in the ubiquinone biosynthetic pathway. This Acinetobacter baumannii (strain AB307-0294) protein is Ubiquinone biosynthesis O-methyltransferase.